Consider the following 368-residue polypeptide: Protein L-Myc (368 aa).

3 disordered regions span residues 39-79 (PPTS…RGHS), 112-179 (RLAP…EKRR), and 218-295 (FPPE…FLER). Residues 135–147 (LEASNPAPATQCQ) are compositionally biased toward polar residues. The span at 247–258 (EEEEEEEEEEEI) shows a compositional bias: acidic residues. Residues 283 to 294 (DVTKRKNHNFLE) show a composition bias toward basic and acidic residues. Positions 285–337 (TKRKNHNFLERKRRNDLRSRFLALRDQVPTLASCSKAPKVVILSKALEYLQAL) constitute a bHLH domain. Positions 337–365 (LVGAEKKMATEKRQLRCRQQQLQKRIAYL) are leucine-zipper.

Efficient DNA binding requires dimerization with another bHLH protein. Binds DNA as a heterodimer with MAX.

The protein resides in the nucleus. This Mus musculus (Mouse) protein is Protein L-Myc (Mycl).